The following is a 64-amino-acid chain: Conotoxin Im11.4 (64 aa).

The first 26 residues, 1–26 (MMFRLTSVSCILLVIAFLNLVGLTNA), serve as a signal peptide directing secretion. 4 disulfide bridges follow: cysteine 27/cysteine 41, cysteine 34/cysteine 46, cysteine 40/cysteine 50, and cysteine 45/cysteine 54. Histidine amide is present on histidine 57. Positions 61-64 (ATFQ) are excised as a propeptide.

This sequence belongs to the conotoxin I2 superfamily. As to expression, expressed by the venom duct.

It is found in the secreted. The chain is Conotoxin Im11.4 from Conus imperialis (Imperial cone).